The primary structure comprises 712 residues: DNA topoisomerase 3 (712 aa).

The Toprim domain maps to 2–135 (KSLIIAEKPS…TKRLWISSVT (134 aa)). Residues Glu8 and Asp104 each contribute to the Mg(2+) site. The Topo IA-type catalytic domain maps to 152 to 581 (FNNLYHAALA…EMKAFTNQVV (430 aa)). The tract at residues 186–191 (SLGRVQ) is interaction with DNA. The active-site O-(5'-phospho-DNA)-tyrosine intermediate is Tyr305.

This sequence belongs to the type IA topoisomerase family. Requires Mg(2+) as cofactor.

The catalysed reaction is ATP-independent breakage of single-stranded DNA, followed by passage and rejoining.. Releases the supercoiling and torsional tension of DNA, which is introduced during the DNA replication and transcription, by transiently cleaving and rejoining one strand of the DNA duplex. Introduces a single-strand break via transesterification at a target site in duplex DNA. The scissile phosphodiester is attacked by the catalytic tyrosine of the enzyme, resulting in the formation of a DNA-(5'-phosphotyrosyl)-enzyme intermediate and the expulsion of a 3'-OH DNA strand. The free DNA strand then undergoes passage around the unbroken strand, thus removing DNA supercoils. Finally, in the religation step, the DNA 3'-OH attacks the covalent intermediate to expel the active-site tyrosine and restore the DNA phosphodiester backbone. The sequence is that of DNA topoisomerase 3 from Staphylococcus saprophyticus subsp. saprophyticus (strain ATCC 15305 / DSM 20229 / NCIMB 8711 / NCTC 7292 / S-41).